The chain runs to 61 residues: Photosystem II reaction center protein K (61 aa).

Residues 1-24 constitute a propeptide that is removed on maturation; sequence MLNIFSLIWICLNSALYSSGFFFG. A helical transmembrane segment spans residues 36-56; that stretch reads IIDFMPVIPVFFFLLAFVWQA.

This sequence belongs to the PsbK family. In terms of assembly, PSII is composed of 1 copy each of membrane proteins PsbA, PsbB, PsbC, PsbD, PsbE, PsbF, PsbH, PsbI, PsbJ, PsbK, PsbL, PsbM, PsbT, PsbX, PsbY, PsbZ, Psb30/Ycf12, at least 3 peripheral proteins of the oxygen-evolving complex and a large number of cofactors. It forms dimeric complexes.

It is found in the plastid. The protein resides in the chloroplast thylakoid membrane. One of the components of the core complex of photosystem II (PSII). PSII is a light-driven water:plastoquinone oxidoreductase that uses light energy to abstract electrons from H(2)O, generating O(2) and a proton gradient subsequently used for ATP formation. It consists of a core antenna complex that captures photons, and an electron transfer chain that converts photonic excitation into a charge separation. In Coffea arabica (Arabian coffee), this protein is Photosystem II reaction center protein K.